The primary structure comprises 658 residues: Integrator complex subunit 9 (658 aa).

The disordered stretch occupies residues 550–574; that stretch reads KHVLQLPPKPPQPPTSKKRKRVSDD. The Nuclear localization signal signature appears at 566–570; it reads KKRKR.

It belongs to the metallo-beta-lactamase superfamily. RNA-metabolizing metallo-beta-lactamase-like family. INTS9 subfamily. As to quaternary structure, component of the Integrator complex, composed of core subunits INTS1, INTS2, INTS3, INTS4, INTS5, INTS6, INTS7, INTS8, INTS9/RC74, INTS10, INTS11/CPSF3L, INTS12, INTS13, INTS14 and INTS15. The core complex associates with protein phosphatase 2A subunits PPP2CA and PPP2R1A, to form the Integrator-PP2A (INTAC) complex. INTS9 is part of the RNA endonuclease subcomplex, composed of INTS4, INTS9, INTS11 and inositol hexakisphosphate (InsP6).

The protein resides in the nucleus. It localises to the cytoplasm. Functionally, component of the integrator complex, a multiprotein complex that terminates RNA polymerase II (Pol II) transcription in the promoter-proximal region of genes. The integrator complex provides a quality checkpoint during transcription elongation by driving premature transcription termination of transcripts that are unfavorably configured for transcriptional elongation: the complex terminates transcription by (1) catalyzing dephosphorylation of the C-terminal domain (CTD) of Pol II subunit POLR2A/RPB1 and SUPT5H/SPT5, (2) degrading the exiting nascent RNA transcript via endonuclease activity and (3) promoting the release of Pol II from bound DNA. The integrator complex is also involved in terminating the synthesis of non-coding Pol II transcripts, such as enhancer RNAs (eRNAs), small nuclear RNAs (snRNAs), telomerase RNAs and long non-coding RNAs (lncRNAs). The chain is Integrator complex subunit 9 (INTS9) from Gallus gallus (Chicken).